A 427-amino-acid chain; its full sequence is Glucan 1,3-beta-glucosidase 2 (427 aa).

The N-terminal stretch at 1-17 (MLISTFIISSLLSIALA) is a signal peptide. Glutamate 217 (proton donor) is an active-site residue. 2 cysteine pairs are disulfide-bonded: cysteine 299–cysteine 426 and cysteine 324–cysteine 355. The Nucleophile role is filled by glutamate 316.

It belongs to the glycosyl hydrolase 5 (cellulase A) family.

It localises to the secreted. It carries out the reaction Successive hydrolysis of beta-D-glucose units from the non-reducing ends of (1-&gt;3)-beta-D-glucans, releasing alpha-glucose.. Functionally, beta-glucanases participate in the metabolism of beta-glucan, the main structural component of the cell wall. It could also function biosynthetically as a transglycosylase. This Wickerhamomyces anomalus (Yeast) protein is Glucan 1,3-beta-glucosidase 2 (EXG2).